We begin with the raw amino-acid sequence, 362 residues long: Zinc phosphodiesterase ELAC protein 1 (362 aa).

His62, His64, Asp66, His67, His181, Asp252, and His312 together coordinate Zn(2+). The Proton acceptor role is filled by Asp66.

The protein belongs to the RNase Z family. As to quaternary structure, homodimer. The cofactor is Zn(2+).

It is found in the cytoplasm. The protein localises to the cytosol. It localises to the nucleus. It catalyses the reaction Endonucleolytic cleavage of RNA, removing extra 3' nucleotides from tRNA precursor, generating 3' termini of tRNAs. A 3'-hydroxy group is left at the tRNA terminus and a 5'-phosphoryl group is left at the trailer molecule.. Functionally, zinc phosphodiesterase, which displays some tRNA 3'-processing endonuclease activity. Specifically involved in tRNA repair: acts downstream of the ribosome-associated quality control (RQC) pathway by removing a 2',3'-cyclic phosphate from tRNAs following cleavage by ANKZF1. tRNAs are then processed by TRNT1. The polypeptide is Zinc phosphodiesterase ELAC protein 1 (Elac1) (Mus musculus (Mouse)).